Here is a 61-residue protein sequence, read N- to C-terminus: Small ribosomal subunit protein uS14 (61 aa).

Cys24, Cys27, Cys40, and Cys43 together coordinate Zn(2+).

It belongs to the universal ribosomal protein uS14 family. Zinc-binding uS14 subfamily. Part of the 30S ribosomal subunit. Contacts proteins S3 and S10. Requires Zn(2+) as cofactor.

In terms of biological role, binds 16S rRNA, required for the assembly of 30S particles and may also be responsible for determining the conformation of the 16S rRNA at the A site. This is Small ribosomal subunit protein uS14 from Roseiflexus castenholzii (strain DSM 13941 / HLO8).